The following is a 436-amino-acid chain: Methylenetetrahydrofolate--tRNA-(uracil-5-)-methyltransferase TrmFO (436 aa).

11–16 (GAGLAG) serves as a coordination point for FAD.

This sequence belongs to the MnmG family. TrmFO subfamily. The cofactor is FAD.

It localises to the cytoplasm. The enzyme catalyses uridine(54) in tRNA + (6R)-5,10-methylene-5,6,7,8-tetrahydrofolate + NADH + H(+) = 5-methyluridine(54) in tRNA + (6S)-5,6,7,8-tetrahydrofolate + NAD(+). It catalyses the reaction uridine(54) in tRNA + (6R)-5,10-methylene-5,6,7,8-tetrahydrofolate + NADPH + H(+) = 5-methyluridine(54) in tRNA + (6S)-5,6,7,8-tetrahydrofolate + NADP(+). Functionally, catalyzes the folate-dependent formation of 5-methyl-uridine at position 54 (M-5-U54) in all tRNAs. The polypeptide is Methylenetetrahydrofolate--tRNA-(uracil-5-)-methyltransferase TrmFO (Shouchella clausii (strain KSM-K16) (Alkalihalobacillus clausii)).